A 366-amino-acid chain; its full sequence is Di-N-acetylchitobiase (366 aa).

The signal sequence occupies residues 1 to 22 (MALCGLPEFTLLLLPLLARLSA). The region spanning 23–366 (GDCPCSEAAL…EMWGALKPRL (344 aa)) is the GH18 domain. The active-site Proton donor is glutamate 127. N-linked (GlcNAc...) asparagine glycans are attached at residues asparagine 131, asparagine 177, asparagine 212, asparagine 246, and asparagine 283.

The protein belongs to the glycosyl hydrolase 18 family.

It is found in the lysosome. In terms of biological role, involved in the degradation of asparagine-linked glycoproteins. Hydrolyze of N-acetyl-beta-D-glucosamine (1-4)N-acetylglucosamine chitobiose core from the reducing end of the bond, it requires prior cleavage by glycosylasparaginase. In Mus musculus (Mouse), this protein is Di-N-acetylchitobiase (Ctbs).